Here is a 351-residue protein sequence, read N- to C-terminus: L-threonine 3-dehydrogenase (351 aa).

Residue Cys39 coordinates Zn(2+). Active-site charge relay system residues include Thr41 and His44. Positions 64, 65, 94, 97, 100, and 108 each coordinate Zn(2+). Residues Ile176, Asp196, Arg201, Leu271 to Ile273, and Ile295 to Tyr296 contribute to the NAD(+) site.

This sequence belongs to the zinc-containing alcohol dehydrogenase family. In terms of assembly, homotetramer. It depends on Zn(2+) as a cofactor.

It is found in the cytoplasm. It catalyses the reaction L-threonine + NAD(+) = (2S)-2-amino-3-oxobutanoate + NADH + H(+). Its pathway is amino-acid degradation; L-threonine degradation via oxydo-reductase pathway; glycine from L-threonine: step 1/2. Its function is as follows. Catalyzes the NAD(+)-dependent oxidation of L-threonine to 2-amino-3-ketobutyrate. This chain is L-threonine 3-dehydrogenase, found in Francisella tularensis subsp. mediasiatica (strain FSC147).